The primary structure comprises 504 residues: WD repeat-containing protein 55 homolog (504 aa).

Positions 32–49 (QEVVNESDSEIGEYDLGD) are enriched in acidic residues. Residues 32-135 (QEVVNESDSE…NAFDMDEDDE (104 aa)) are disordered. Residues 66–76 (DSISSDGSFNP) show a composition bias toward polar residues. Residues 77 to 95 (NDEDSDTDSDDSMLDEPDE) are compositionally biased toward acidic residues. Positions 114–124 (SGSSNRNQDSD) are enriched in polar residues. WD repeat units lie at residues 158-197 (KLED…NKLL), 202-241 (VHAK…LKKL), 245-283 (AHDD…SIFE), 286-325 (EIED…LYVQ), 328-367 (PYEE…YHCD), and 412-451 (QHNM…DFGD). Residues 484–504 (AKEDNNDNENDDATAGPSNTT) are disordered.

It belongs to the WD repeat WDR55 family.

This is WD repeat-containing protein 55 homolog from Drosophila willistoni (Fruit fly).